Reading from the N-terminus, the 154-residue chain is AP-1 complex subunit sigma-2 (154 aa).

This sequence belongs to the adaptor complexes small subunit family. Adaptor protein complex 1 (AP-1) is a heterotetramer composed of two large adaptins (gamma-type subunit and beta-type subunit), a medium adaptin (mu-type subunit) and a small adaptin (sigma-type subunit).

It localises to the golgi apparatus. The protein resides in the trans-Golgi network. The protein localises to the cytoplasmic vesicle. Its subcellular location is the clathrin-coated vesicle membrane. Its function is as follows. Subunit of clathrin-associated adaptor protein complex 1 that plays a role in protein sorting in the trans-Golgi network (TGN) and endosomes. The AP complexes mediate the recruitment of clathrin to membranes and the recognition of sorting signals within the cytosolic tails of transmembrane cargo molecules. Also involved in early steps of phagocytosis and macropinocytosis. The chain is AP-1 complex subunit sigma-2 (ap1s2) from Dictyostelium discoideum (Social amoeba).